We begin with the raw amino-acid sequence, 309 residues long: HPr kinase/phosphorylase (309 aa).

Catalysis depends on residues histidine 138 and lysine 159. 153-160 lines the ATP pocket; it reads GDSGIGKS. Serine 160 contributes to the Mg(2+) binding site. Residue aspartate 177 is the Proton acceptor; for phosphorylation activity. Proton donor; for dephosphorylation activity of the active site. An important for the catalytic mechanism of both phosphorylation and dephosphorylation region spans residues 201 to 210; the sequence is LEIRGVGIID. Mg(2+) is bound at residue glutamate 202. Arginine 243 is an active-site residue. Residues 264 to 269 form an important for the catalytic mechanism of dephosphorylation region; the sequence is PVKTGR.

It belongs to the HPrK/P family. Homohexamer. Requires Mg(2+) as cofactor.

It carries out the reaction [HPr protein]-L-serine + ATP = [HPr protein]-O-phospho-L-serine + ADP + H(+). It catalyses the reaction [HPr protein]-O-phospho-L-serine + phosphate + H(+) = [HPr protein]-L-serine + diphosphate. Functionally, catalyzes the ATP- as well as the pyrophosphate-dependent phosphorylation of a specific serine residue in HPr, a phosphocarrier protein of the phosphoenolpyruvate-dependent sugar phosphotransferase system (PTS). HprK/P also catalyzes the pyrophosphate-producing, inorganic phosphate-dependent dephosphorylation (phosphorolysis) of seryl-phosphorylated HPr (P-Ser-HPr). The two antagonistic activities of HprK/P are regulated by several intracellular metabolites, which change their concentration in response to the absence or presence of rapidly metabolisable carbon sources (glucose, fructose, etc.) in the growth medium. Therefore, by controlling the phosphorylation state of HPr, HPrK/P is a sensor enzyme that plays a major role in the regulation of carbon metabolism and sugar transport: it mediates carbon catabolite repression (CCR), and regulates PTS-catalyzed carbohydrate uptake and inducer exclusion. The sequence is that of HPr kinase/phosphorylase from Streptococcus thermophilus (strain ATCC BAA-250 / LMG 18311).